A 368-amino-acid chain; its full sequence is DNA replication and repair protein RecF (368 aa).

Gly30 to Thr37 contributes to the ATP binding site.

Belongs to the RecF family.

It localises to the cytoplasm. The RecF protein is involved in DNA metabolism; it is required for DNA replication and normal SOS inducibility. RecF binds preferentially to single-stranded, linear DNA. It also seems to bind ATP. The sequence is that of DNA replication and repair protein RecF from Xanthomonas euvesicatoria pv. vesicatoria (strain 85-10) (Xanthomonas campestris pv. vesicatoria).